The chain runs to 263 residues: Tryptophan synthase alpha chain (263 aa).

Residues E49 and D60 each act as proton acceptor in the active site.

The protein belongs to the TrpA family. Tetramer of two alpha and two beta chains.

It catalyses the reaction (1S,2R)-1-C-(indol-3-yl)glycerol 3-phosphate + L-serine = D-glyceraldehyde 3-phosphate + L-tryptophan + H2O. It participates in amino-acid biosynthesis; L-tryptophan biosynthesis; L-tryptophan from chorismate: step 5/5. Its function is as follows. The alpha subunit is responsible for the aldol cleavage of indoleglycerol phosphate to indole and glyceraldehyde 3-phosphate. The sequence is that of Tryptophan synthase alpha chain from Clostridium kluyveri (strain NBRC 12016).